The following is a 211-amino-acid chain: Thymidylate kinase (211 aa).

Position 7–14 (7–14 (GIDGCGKT)) interacts with ATP.

Belongs to the thymidylate kinase family.

The enzyme catalyses dTMP + ATP = dTDP + ADP. Functionally, phosphorylation of dTMP to form dTDP in both de novo and salvage pathways of dTTP synthesis. This Anaplasma marginale (strain St. Maries) protein is Thymidylate kinase.